A 160-amino-acid polypeptide reads, in one-letter code: uncharacterized protein (160 aa).

This is an uncharacterized protein from Lactobacillus helveticus (Lactobacillus suntoryeus).